The chain runs to 501 residues: Cytochrome P450 2S1 (501 aa).

Position 441 (Cys441) interacts with heme.

Belongs to the cytochrome P450 family. Requires heme as cofactor.

The protein resides in the endoplasmic reticulum membrane. Its subcellular location is the microsome membrane. It carries out the reaction all-trans-retinoate + reduced [NADPH--hemoprotein reductase] + O2 = all-trans-5,6-epoxyretinoate + oxidized [NADPH--hemoprotein reductase] + H2O + H(+). It catalyses the reaction all-trans-retinoate + reduced [NADPH--hemoprotein reductase] + O2 = all-trans-4-hydroxyretinoate + oxidized [NADPH--hemoprotein reductase] + H2O + H(+). The enzyme catalyses (5S)-hydroperoxy-(6E,8Z,11Z,14Z)-eicosatetraenoate = 5-oxo-(6E,8Z,11Z,14Z)-eicosatetraenoate + H2O. The catalysed reaction is (12S)-hydroperoxy-(5Z,8Z,10E,14Z)-eicosatetraenoate = 12-oxo-(5Z,8Z,10E,14Z)-eicosatetraenoate + H2O. It carries out the reaction (15S)-hydroperoxy-(5Z,8Z,11Z,13E)-eicosatetraenoate = 15-oxo-(5Z,8Z,11Z,13E)-eicosatetraenoate + H2O. It catalyses the reaction prostaglandin H2 = thromboxane A2. The enzyme catalyses prostaglandin H2 = (12S)-hydroxy-(5Z,8E,10E)-heptadecatrienoate + malonaldehyde. The catalysed reaction is (13S)-hydroperoxy-(9Z,11E)-octadecadienoate = 13-oxo-(9Z,11E)-octadecadienoate + H2O. It functions in the pathway lipid metabolism; fatty acid metabolism. A cytochrome P450 monooxygenase involved in the metabolism of retinoids and eicosanoids. In epidermis, may contribute to the oxidative metabolism of all-trans-retinoic acid. For this activity, uses molecular oxygen inserting one oxygen atom into a substrate, and reducing the second into a water molecule, with two electrons provided by NADPH via cytochrome P450 reductase (NADPH--hemoprotein reductase). Additionally, displays peroxidase and isomerase activities toward various oxygenated eicosanoids such as prostaglandin H2 (PGH2) and hydroperoxyeicosatetraenoates (HPETEs). Independently of cytochrome P450 reductase, NADPH, and O2, catalyzes the breakdown of PGH2 to hydroxyheptadecatrienoic acid (HHT) and malondialdehyde (MDA), which is known to act as a mediator of DNA damage. The polypeptide is Cytochrome P450 2S1 (Cyp2s1) (Mus musculus (Mouse)).